We begin with the raw amino-acid sequence, 473 residues long: Photosystem II CP43 reaction center protein (473 aa).

Residues 1–14 (MKILYSPRRFYPVE) constitute a propeptide that is removed on maturation. T15 is modified (N-acetylthreonine). T15 carries the phosphothreonine modification. The next 5 membrane-spanning stretches (helical) occupy residues 69–93 (LFEV…PHLA), 134–155 (IIGP…KDKN), 178–200 (KALY…RKIT), 255–275 (KPFA…LSYS), and 291–312 (WFNN…ASQA). A [CaMn4O5] cluster-binding site is contributed by E367. A helical membrane pass occupies residues 447–471 (RARAAAAGFEKGIDRDFEPVLSTTP).

Belongs to the PsbB/PsbC family. PsbC subfamily. In terms of assembly, PSII is composed of 1 copy each of membrane proteins PsbA, PsbB, PsbC, PsbD, PsbE, PsbF, PsbH, PsbI, PsbJ, PsbK, PsbL, PsbM, PsbT, PsbX, PsbY, PsbZ, Psb30/Ycf12, at least 3 peripheral proteins of the oxygen-evolving complex and a large number of cofactors. It forms dimeric complexes. Requires Binds multiple chlorophylls and provides some of the ligands for the Ca-4Mn-5O cluster of the oxygen-evolving complex. It may also provide a ligand for a Cl- that is required for oxygen evolution. PSII binds additional chlorophylls, carotenoids and specific lipids. as cofactor.

The protein resides in the plastid. The protein localises to the chloroplast thylakoid membrane. Its function is as follows. One of the components of the core complex of photosystem II (PSII). It binds chlorophyll and helps catalyze the primary light-induced photochemical processes of PSII. PSII is a light-driven water:plastoquinone oxidoreductase, using light energy to abstract electrons from H(2)O, generating O(2) and a proton gradient subsequently used for ATP formation. The protein is Photosystem II CP43 reaction center protein of Huperzia lucidula (Shining clubmoss).